The following is a 179-amino-acid chain: Large ribosomal subunit protein uL5 (179 aa).

This sequence belongs to the universal ribosomal protein uL5 family. Part of the 50S ribosomal subunit; part of the 5S rRNA/L5/L18/L25 subcomplex. Contacts the 5S rRNA and the P site tRNA. Forms a bridge to the 30S subunit in the 70S ribosome.

Functionally, this is one of the proteins that bind and probably mediate the attachment of the 5S RNA into the large ribosomal subunit, where it forms part of the central protuberance. In the 70S ribosome it contacts protein S13 of the 30S subunit (bridge B1b), connecting the 2 subunits; this bridge is implicated in subunit movement. Contacts the P site tRNA; the 5S rRNA and some of its associated proteins might help stabilize positioning of ribosome-bound tRNAs. The chain is Large ribosomal subunit protein uL5 from Delftia acidovorans (strain DSM 14801 / SPH-1).